The primary structure comprises 101 residues: ATP-dependent Clp protease adapter protein ClpS (101 aa).

Residues 1–24 form a disordered region; that stretch reads MVVASAPAKPGSVGQQESASRDAT. Positions 13-23 are enriched in polar residues; that stretch reads VGQQESASRDA.

It belongs to the ClpS family. In terms of assembly, binds to the N-terminal domain of the chaperone ClpA.

Its function is as follows. Involved in the modulation of the specificity of the ClpAP-mediated ATP-dependent protein degradation. The sequence is that of ATP-dependent Clp protease adapter protein ClpS from Mycobacterium marinum (strain ATCC BAA-535 / M).